An 811-amino-acid chain; its full sequence is Hypoxia-inducible factor 1-alpha (811 aa).

Residues 1–27 (MDSPGGVTDKKRISSERRKEKSRDAAR) are disordered. Residues 8–27 (TDKKRISSERRKEKSRDAAR) show a composition bias toward basic and acidic residues. The region spanning 17–70 (RRKEKSRDAARCRRSKESEVFYELAHQLPLPHTVSAHLDKASIMRLTISYLRMR) is the bHLH domain. PAS domains are found at residues 80–157 (TEAN…PVKK) and 228–298 (PHPS…FTKG). Positions 302-345 (TGQYRMLAKQGGYVWVETQATVIYNTKNSQPQCIVCVNYVLSGI) constitute a PAC domain. The ODD stretch occupies residues 401-587 (APAAGDTIIS…LSPLESSSSG (187 aa)). Pro402 carries the post-translational modification 4-hydroxyproline. Residues 490–518 (PQVQEQPTSPSDASTSQSSPEPSSPNDYC) are disordered. Over residues 496–514 (PTSPSDASTSQSSPEPSSP) the composition is skewed to low complexity. The segment at 529–573 (FKLELVEKLFAIDTEAKNPFSTQETDLDLEMLAPYIPMDDDFQLR) is NTAD. The residue at position 562 (Pro562) is a 4-hydroxyproline. The tract at residues 576–785 (DQLSPLESSS…GLPQLTSYDC (210 aa)) is ID. Positions 634–652 (NDTSSAPASPYSGNRSRTA) are enriched in polar residues. The interval 634-655 (NDTSSAPASPYSGNRSRTASPI) is disordered. 2 short sequence motifs (nuclear localization signal) span residues 703–706 (RKRK) and 718–721 (GIGS). The tract at residues 771-811 (SMDESGLPQLTSYDCEVNAPIQGNRNLLQGEELLRALDQVN) is CTAD. Asn788 carries the (3S)-3-hydroxyasparagine modification.

As to quaternary structure, efficient DNA binding requires heterodimerization of an alpha and a beta/ARNT subunit. In normoxia, is hydroxylated on Pro-402 and Pro-562. The hydroxylated prolines promote interaction with VHL, initiating rapid ubiquitination and subsequent proteasomal degradation. Under hypoxia, proline hydroxylation is impaired and ubiquitination is attenuated, resulting in stabilization. In terms of processing, in normoxia, is hydroxylated on Asn-788, thus abrogating interaction with CREBBP and EP300 and preventing transcriptional activation. Post-translationally, the iron and 2-oxoglutarate dependent 3-hydroxylation of asparagine is (S) stereospecific within HIF CTAD domains.

The protein resides in the cytoplasm. The protein localises to the nucleus. Its subcellular location is the nucleus speckle. Its activity is regulated as follows. Induced by reactive oxygen species (ROS). Its function is as follows. Functions as a master transcriptional regulator of the adaptive response to hypoxia. Under hypoxic conditions, activates the transcription of over 40 genes, including erythropoietin, glucose transporters, glycolytic enzymes, vascular endothelial growth factor, HILPDA, and other genes whose protein products increase oxygen delivery or facilitate metabolic adaptation to hypoxia. Plays an essential role in embryonic vascularization, tumor angiogenesis and pathophysiology of ischemic disease. In Gallus gallus (Chicken), this protein is Hypoxia-inducible factor 1-alpha (HIF1A).